The chain runs to 102 residues: Small ribosomal subunit protein uS10 (102 aa).

The protein belongs to the universal ribosomal protein uS10 family. In terms of assembly, part of the 30S ribosomal subunit.

Involved in the binding of tRNA to the ribosomes. This chain is Small ribosomal subunit protein uS10, found in Chlorobium phaeobacteroides (strain BS1).